The sequence spans 337 residues: NADH-quinone oxidoreductase subunit H (337 aa).

The next 9 membrane-spanning stretches (helical) occupy residues glycine 9–valine 29, proline 50–phenylalanine 70, glycine 82–isoleucine 102, valine 115–glycine 135, isoleucine 161–valine 181, threonine 186–alanine 206, serine 245–isoleucine 265, valine 273–valine 293, and phenylalanine 313–isoleucine 333.

This sequence belongs to the complex I subunit 1 family. NDH-1 is composed of 14 different subunits. Subunits NuoA, H, J, K, L, M, N constitute the membrane sector of the complex.

It localises to the cell inner membrane. The enzyme catalyses a quinone + NADH + 5 H(+)(in) = a quinol + NAD(+) + 4 H(+)(out). In terms of biological role, NDH-1 shuttles electrons from NADH, via FMN and iron-sulfur (Fe-S) centers, to quinones in the respiratory chain. The immediate electron acceptor for the enzyme in this species is believed to be ubiquinone. Couples the redox reaction to proton translocation (for every two electrons transferred, four hydrogen ions are translocated across the cytoplasmic membrane), and thus conserves the redox energy in a proton gradient. This subunit may bind ubiquinone. The sequence is that of NADH-quinone oxidoreductase subunit H from Parvibaculum lavamentivorans (strain DS-1 / DSM 13023 / NCIMB 13966).